The sequence spans 610 residues: MITHAMEGSKTFNIPTFVLDENCNFIPDVLSRANAKFIKEVLIRDSYNAVCLANSFIPMATQTVEQILIIITKFKFSRSRDLLMSVFRLGVHINRFYAGKNQVKHMITMMKSLFDTEEAMRQLDRALMGLFVDARDNSYMPLIALSLHENGLPDSKFIKAVRLIQTTVNSFHNRPDADIEQYAEKLRAYNYLYKIPKYSLKEAVDIYSDNLKDLTIGVNKKPTLLFTSSDDAYLSHIYNDLLFLTSTWNMIYNCKKEIRRLNTWIKYEINSIMETAVLVGFQLPDLKETILDLAALISNMNLVSPDKELFPHYKLILAKLFEICIFATKANICILPSFIKGHLIEFEDVLKRSNDDEDLNYLLLKSRDSDDEYDEDKPPIQVDPGRVDNVLTDSDFFNVTPENAFSSIAIMPISYDKTIDVEDNEIQVLEVEMQSLSAVVYGAVASKYGLSLEQVIRKLNRNEGRTSSRASPSHSTSTVPYSPPQSDRSTPTSILRQRVPMRSNSRSSSVSFSQEDSNRSHYSDETNISDYSYPMADLELEDEEPMEDHPHSPQSTSSNNSMSRQSRALQNGQRRRAPTMVPSSQTRRQNNARPRRVARRLTEMMNDARL.

Disordered regions lie at residues 462-530 (NEGR…NISD) and 543-610 (EEPM…DARL). Over residues 467-478 (SSRASPSHSTST) the composition is skewed to low complexity. The segment covering 484–495 (PQSDRSTPTSIL) has biased composition (polar residues). Low complexity-rich tracts occupy residues 503 to 515 (SNSR…FSQE) and 552 to 567 (SPQS…RQSR). Over residues 581 to 592 (VPSSQTRRQNNA) the composition is skewed to polar residues. Basic and acidic residues predominate over residues 600 to 610 (RLTEMMNDARL).

The protein belongs to the herpesviridae pp85 family. In terms of processing, phosphorylated.

It localises to the virion tegument. Its subcellular location is the host cytoplasm. The polypeptide is Phosphoprotein 85 (U14) (Homo sapiens (Human)).